The following is a 399-amino-acid chain: ATP-dependent RNA helicase FAL1 (399 aa).

Residues 23–51 (PTFESMNLKDDLLRGIYGYGFEAPSAIQS) carry the Q motif motif. The region spanning 54 to 227 (ITQIISGTDV…KKFMSDPVKI (174 aa)) is the Helicase ATP-binding domain. ATP is bound at residue 67-74 (AQSGTGKT). The short motif at 173–176 (DEAD) is the DEAD box element. Positions 238–399 (GIKQYYVNVE…PVPADLSTIS (162 aa)) constitute a Helicase C-terminal domain.

It belongs to the DEAD box helicase family. DDX48/FAL1 subfamily.

It is found in the nucleus. The protein localises to the nucleolus. The enzyme catalyses ATP + H2O = ADP + phosphate + H(+). Functionally, ATP-dependent RNA helicase involved in 40S ribosomal subunit biogenesis. Required for the processing and cleavage of 35S pre-rRNA at sites A0, A1, and A2, leading to mature 18S rRNA. This Vanderwaltozyma polyspora (strain ATCC 22028 / DSM 70294 / BCRC 21397 / CBS 2163 / NBRC 10782 / NRRL Y-8283 / UCD 57-17) (Kluyveromyces polysporus) protein is ATP-dependent RNA helicase FAL1 (FAL1).